A 115-amino-acid chain; its full sequence is U3-lycotoxin-Ls1a (115 aa).

The N-terminal stretch at 1 to 20 (MKFVLLFGVFLVTLFSYSSA) is a signal peptide. Residues 21-44 (EMLDDFDQADEDELLSLIEKEEAR) constitute a propeptide that is removed on maturation. Cystine bridges form between Cys48/Cys63, Cys55/Cys72, Cys62/Cys87, and Cys74/Cys85.

This sequence belongs to the neurotoxin 19 (CSTX) family. 01 subfamily. As to expression, expressed by the venom gland.

The protein resides in the secreted. This Lycosa singoriensis (Wolf spider) protein is U3-lycotoxin-Ls1a.